Reading from the N-terminus, the 110-residue chain is UPF0060 membrane protein Psyr_3752 (110 aa).

4 helical membrane-spanning segments follow: residues 5–25 (LWFF…WLWL), 28–48 (GKSA…ALLL), 59–79 (AYAA…GLVE), and 84–104 (LGTD…ILLG).

The protein belongs to the UPF0060 family.

The protein resides in the cell inner membrane. The sequence is that of UPF0060 membrane protein Psyr_3752 from Pseudomonas syringae pv. syringae (strain B728a).